The following is a 223-amino-acid chain: Triosephosphate isomerase (223 aa).

Position 10–12 (10–12 (NFK)) interacts with substrate. The active-site Electrophile is His-94. The Proton acceptor role is filled by Glu-142. Substrate-binding positions include Ile-147, Gly-182, and 203–204 (AS).

It belongs to the triosephosphate isomerase family. Homotetramer; dimer of dimers.

The protein localises to the cytoplasm. It carries out the reaction D-glyceraldehyde 3-phosphate = dihydroxyacetone phosphate. It participates in carbohydrate biosynthesis; gluconeogenesis. The protein operates within carbohydrate degradation; glycolysis; D-glyceraldehyde 3-phosphate from glycerone phosphate: step 1/1. Involved in the gluconeogenesis. Catalyzes stereospecifically the conversion of dihydroxyacetone phosphate (DHAP) to D-glyceraldehyde-3-phosphate (G3P). In Archaeoglobus fulgidus (strain ATCC 49558 / DSM 4304 / JCM 9628 / NBRC 100126 / VC-16), this protein is Triosephosphate isomerase.